The primary structure comprises 555 residues: Transmembrane protein 87A (555 aa).

A signal peptide spans 1–21 (MAAAAWLQVLPVILLLLGAHP). At 22 to 225 (SPLSFFSAGP…YEYLTLEDYP (204 aa)) the chain is on the lumenal side. 2 disulfides stabilise this stretch: Cys-74–Cys-128 and Cys-89–Cys-431. N-linked (GlcNAc...) asparagine glycosylation is found at Asn-79, Asn-127, Asn-157, and Asn-160. A helical transmembrane segment spans residues 226–246 (LMIFFMVMCIVYVLFGVLWLA). Residues 247–257 (WSACYWRDLLR) lie on the Cytoplasmic side of the membrane. A helical transmembrane segment spans residues 258–278 (IQFWIGAVIFLGMLEKAVFYA). Over 279–305 (EFQNIRYKGESVQGALILAELLSAVKR) the chain is Lumenal. A helical membrane pass occupies residues 306–322 (SLARTLVIIVSLGYGIV). Residues 323–325 (KPR) are Cytoplasmic-facing. A helical membrane pass occupies residues 326-346 (LGVTLHKVVVAGALYLLFSGM). At 347–361 (EGVLRVTGAQTDLAS) the chain is on the lumenal side. The chain crosses the membrane as a helical span at residues 362–382 (LAFIPLAFLDTALCWWIFISL). At 383-403 (TQTMKLLKLRRNIVKLSLYRH) the chain is on the cytoplasmic side. The chain crosses the membrane as a helical span at residues 404 to 424 (FTNTLILAVAASIVFIIWTTM). Residues 425 to 437 (KFRIVTCQSDWRE) are Lumenal-facing. The helical transmembrane segment at 438 to 458 (LWVDDAIWRLLFSMILFVIMV) threads the bilayer. The Cytoplasmic portion of the chain corresponds to 459-555 (LWRPSANNQR…ITHFERSKME (97 aa)). The disordered stretch occupies residues 473–516 (PLSEEEEEDEQKEPMLKESFEGMKMRSTKQEPNGNSKVNKAQED). Positions 484 to 496 (KEPMLKESFEGMK) are enriched in basic and acidic residues. Residues 502 to 511 (QEPNGNSKVN) show a composition bias toward polar residues. Ser-540 bears the Phosphoserine mark.

The protein belongs to the LU7TM family. TMEM87 subfamily. As to quaternary structure, may interact with STOML3; STOML3 potentiates the mechanosensitive ion channel activity associated with TMEM87A.

The protein localises to the cell membrane. The protein resides in the golgi apparatus membrane. It localises to the cell projection. It is found in the ruffle. Functionally, potential monoatomic ion channel gated by mechanical force, implicated in normal touch sensitivity through the generation of mechanically activated currents. However, a direct channel activity is debated and an alternative could be that it functions as a chaperone for an unidentified mechanosensitive ion channel. Could also be involved in cell mechanosensitivity regulating cell adhesion and migration. May also be involved in retrograde transport from endosomes to the trans-Golgi network (TGN). In Homo sapiens (Human), this protein is Transmembrane protein 87A.